The primary structure comprises 121 residues: Large ribosomal subunit protein eL31 (121 aa).

The protein belongs to the eukaryotic ribosomal protein eL31 family.

The protein is Large ribosomal subunit protein eL31 (RPL31) of Panax ginseng (Korean ginseng).